The primary structure comprises 489 residues: NADH-quinone oxidoreductase subunit N (489 aa).

The next 14 membrane-spanning stretches (helical) occupy residues 8 to 28 (LIAM…MLSI), 35 to 55 (FTIA…LYYV), 75 to 95 (FFTA…YPWL), 105 to 125 (FYML…AHHL), 127 to 147 (SMFI…GYAF), 159 to 179 (YMLL…LLYA), 203 to 223 (VLAG…LFPF), 235 to 255 (PAPT…AVVM), 271 to 291 (MILG…ALTQ), 303 to 323 (VSHL…PILA), 329 to 349 (IYLA…AVAS), 374 to 394 (AVVM…LGFI), 407 to 427 (SLWW…FYYL), and 456 to 476 (LITL…QPLI).

It belongs to the complex I subunit 2 family. NDH-1 is composed of 13 different subunits. Subunits NuoA, H, J, K, L, M, N constitute the membrane sector of the complex.

Its subcellular location is the cell inner membrane. It catalyses the reaction a quinone + NADH + 5 H(+)(in) = a quinol + NAD(+) + 4 H(+)(out). In terms of biological role, NDH-1 shuttles electrons from NADH, via FMN and iron-sulfur (Fe-S) centers, to quinones in the respiratory chain. The immediate electron acceptor for the enzyme in this species is believed to be ubiquinone. Couples the redox reaction to proton translocation (for every two electrons transferred, four hydrogen ions are translocated across the cytoplasmic membrane), and thus conserves the redox energy in a proton gradient. This chain is NADH-quinone oxidoreductase subunit N, found in Proteus mirabilis (strain HI4320).